The sequence spans 76 residues: Protein MATERNALLY EXPRESSED GENE 4 (76 aa).

The signal sequence occupies residues 1 to 27; sequence MEYRKRVDALVFFSLLLLGYFAAHAHG. An intrachain disulfide couples Cys-53 to Cys-75.

This sequence belongs to the MEG family. As to expression, expressed exclusively in endosperm.

In Zea mays (Maize), this protein is Protein MATERNALLY EXPRESSED GENE 4 (MEG4).